Here is a 491-residue protein sequence, read N- to C-terminus: Cysteine--tRNA ligase (491 aa).

Cys-31 contributes to the Zn(2+) binding site. The short motif at 33 to 43 (PTVYGDAHLGH) is the 'HIGH' region element. Positions 226, 251, and 255 each coordinate Zn(2+). A 'KMSKS' region motif is present at residues 283-287 (KMGKS). Residue Lys-286 coordinates ATP.

The protein belongs to the class-I aminoacyl-tRNA synthetase family. In terms of assembly, monomer. Requires Zn(2+) as cofactor.

It localises to the cytoplasm. The enzyme catalyses tRNA(Cys) + L-cysteine + ATP = L-cysteinyl-tRNA(Cys) + AMP + diphosphate. This chain is Cysteine--tRNA ligase, found in Bacteroides fragilis (strain ATCC 25285 / DSM 2151 / CCUG 4856 / JCM 11019 / LMG 10263 / NCTC 9343 / Onslow / VPI 2553 / EN-2).